We begin with the raw amino-acid sequence, 308 residues long: Cis-prenyltransferase 4, chloroplastic (308 aa).

The transit peptide at Met1–Ala45 directs the protein to the chloroplast. The active site involves Asp84.

Belongs to the UPP synthase family. Mg(2+) serves as cofactor. In terms of tissue distribution, widely expressed.

It localises to the plastid. The protein localises to the chloroplast. In terms of biological role, uses neryl diphosphate and geranyl diphosphate to catalyze the cis-prenyl chain elongation and produce polyprenyl diphosphate with a chain of 55 carbons. The protein is Cis-prenyltransferase 4, chloroplastic of Solanum lycopersicum (Tomato).